The chain runs to 514 residues: MTTAKRPLALLILDGWGYRENPHNNAIFHARTPVLDKLNAQFPNSLISGSGLDVGLPDGQMGNSEVGHINIGSGRVVYQELTRVSKAIEEGEFEENTVLCKTIDDAIKANGAVHIMGLLSPGGVHSHEEHIEAMCRMAVKRGAKQVYLHAFLDGRDTPPRSAKGSLAHFGDLFTTLGQGRIASVIGRYYAMDRDNRWDRVSQAYELITQGKGKFSYSNAVDALEAAYSRDENDEFVAASSITDAQGQTASLNDGDSLIFMNFRADRARQITRSVINADFDGFERAVTPKINFVTLTEYAADISAPKAFSSSDLVNTLGETLQNLGKTQLRISETEKYAHVTFFFNGGKEDPFKGEDRIMIPSPKVATYDLQPEMNSTELTDKLVEAIESAKYDVVICNYPNGDMVGHTGNFDAAVKACEAVDACIGRVVAALAKVNGECLITADHGNAEQMTDESTGQAHTAHTSELVPFIYVGRDASIKDGGRLSDIAPTMLSLMGQPVPAEMTGRCIIDLKE.

The Mn(2+) site is built by D14 and S64. S64 (phosphoserine intermediate) is an active-site residue. Residues H125, R155 to D156, R187, R193, R263 to R266, and K336 contribute to the substrate site. The Mn(2+) site is built by D403, H407, D444, H445, and H463.

This sequence belongs to the BPG-independent phosphoglycerate mutase family. Monomer. Mn(2+) serves as cofactor.

The enzyme catalyses (2R)-2-phosphoglycerate = (2R)-3-phosphoglycerate. The protein operates within carbohydrate degradation; glycolysis; pyruvate from D-glyceraldehyde 3-phosphate: step 3/5. Its function is as follows. Catalyzes the interconversion of 2-phosphoglycerate and 3-phosphoglycerate. The sequence is that of 2,3-bisphosphoglycerate-independent phosphoglycerate mutase from Shewanella denitrificans (strain OS217 / ATCC BAA-1090 / DSM 15013).